Here is a 55-residue protein sequence, read N- to C-terminus: DNA-binding protein (55 aa).

Residues 1 to 55 (MVYRRRRRSSTGTTYGSTRRRRSSGYRRRPGRPRTYRRSRSRSSTGRRSYRTRYY) form a disordered region. 2 repeat units span residues 5-10 (RRRRSS) and 19-24 (RRRRSS). The interval 5–24 (RRRRSSTGTTYGSTRRRRSS) is 2 X 6 AA repeats of R-R-R-R-S-S. Basic residues predominate over residues 18-41 (TRRRRSSGYRRRPGRPRTYRRSRS).

Interacts with protein AC132. Phosphorylated.

The protein resides in the virion. Its subcellular location is the host cytoplasm. Functionally, plays a role in viral DNA packaging and nucleocapsid assembly. Promotes viral gene transcription during the late stage of infection while it is non-essential for the basal level of viral gene transcription. This is DNA-binding protein (P6.9) from Lepidoptera (butterflies and moths).